The chain runs to 463 residues: Asparagine--tRNA ligase (463 aa).

It belongs to the class-II aminoacyl-tRNA synthetase family. Homodimer.

Its subcellular location is the cytoplasm. It carries out the reaction tRNA(Asn) + L-asparagine + ATP = L-asparaginyl-tRNA(Asn) + AMP + diphosphate + H(+). The protein is Asparagine--tRNA ligase of Clostridium kluyveri (strain ATCC 8527 / DSM 555 / NBRC 12016 / NCIMB 10680 / K1).